The following is a 102-amino-acid chain: MGQIPLEHGLIVATILFALGFYGVMVRRNLLFMLMSLEIMMNAAALAFVLAGSVWAQPDGQVMFILILTLAAAEACIGLAIVLQFYHRFHHLDVDAASEMRG.

3 helical membrane passes run 6–26 (LEHG…GVMV), 30–50 (LLFM…AFVL), and 62–82 (VMFI…LAIV).

Belongs to the complex I subunit 4L family. In terms of assembly, NDH-1 is composed of 14 different subunits. Subunits NuoA, H, J, K, L, M, N constitute the membrane sector of the complex.

The protein localises to the cell inner membrane. The catalysed reaction is a quinone + NADH + 5 H(+)(in) = a quinol + NAD(+) + 4 H(+)(out). Its function is as follows. NDH-1 shuttles electrons from NADH, via FMN and iron-sulfur (Fe-S) centers, to quinones in the respiratory chain. The immediate electron acceptor for the enzyme in this species is believed to be ubiquinone. Couples the redox reaction to proton translocation (for every two electrons transferred, four hydrogen ions are translocated across the cytoplasmic membrane), and thus conserves the redox energy in a proton gradient. The sequence is that of NADH-quinone oxidoreductase subunit K from Acinetobacter baumannii (strain AB307-0294).